A 440-amino-acid chain; its full sequence is Phosphoglucosamine mutase (440 aa).

Serine 97 acts as the Phosphoserine intermediate in catalysis. The Mg(2+) site is built by serine 97, aspartate 237, aspartate 239, and aspartate 241. Serine 97 bears the Phosphoserine mark.

This sequence belongs to the phosphohexose mutase family. Mg(2+) serves as cofactor. Post-translationally, activated by phosphorylation.

It carries out the reaction alpha-D-glucosamine 1-phosphate = D-glucosamine 6-phosphate. Functionally, catalyzes the conversion of glucosamine-6-phosphate to glucosamine-1-phosphate. The chain is Phosphoglucosamine mutase from Nautilia profundicola (strain ATCC BAA-1463 / DSM 18972 / AmH).